The sequence spans 226 residues: Cytidylate kinase (226 aa).

Gly-12–Thr-20 contacts ATP.

This sequence belongs to the cytidylate kinase family. Type 1 subfamily.

It is found in the cytoplasm. It catalyses the reaction CMP + ATP = CDP + ADP. It carries out the reaction dCMP + ATP = dCDP + ADP. The protein is Cytidylate kinase of Vibrio vulnificus (strain YJ016).